Consider the following 94-residue polypeptide: Co-chaperonin GroES (94 aa).

This sequence belongs to the GroES chaperonin family. As to quaternary structure, heptamer of 7 subunits arranged in a ring. Interacts with the chaperonin GroEL.

It localises to the cytoplasm. Functionally, together with the chaperonin GroEL, plays an essential role in assisting protein folding. The GroEL-GroES system forms a nano-cage that allows encapsulation of the non-native substrate proteins and provides a physical environment optimized to promote and accelerate protein folding. GroES binds to the apical surface of the GroEL ring, thereby capping the opening of the GroEL channel. This Parageobacillus thermoglucosidasius (Geobacillus thermoglucosidasius) protein is Co-chaperonin GroES.